The sequence spans 165 residues: Large ribosomal subunit protein uL11 (165 aa).

Ser38 is modified (phosphoserine). A Glycyl lysine isopeptide (Lys-Gly) (interchain with G-Cter in SUMO2) cross-link involves residue Lys40. A Glycyl lysine isopeptide (Lys-Gly) (interchain with G-Cter in ubiquitin) cross-link involves residue Lys48. Lys54 carries the post-translational modification N6-acetyllysine. Lys83 participates in a covalent cross-link: Glycyl lysine isopeptide (Lys-Gly) (interchain with G-Cter in ubiquitin). Phosphoserine is present on Ser165.

This sequence belongs to the universal ribosomal protein uL11 family. In terms of assembly, component of the large ribosomal subunit. Mature ribosomes consist of a small (40S) and a large (60S) subunit. The 40S subunit contains about 33 different proteins and 1 molecule of RNA (18S). The 60S subunit contains about 49 different proteins and 3 molecules of RNA (28S, 5.8S and 5S). Ubiquitinated at Lys-48 and Lys-83 by RNF14 and RNF25 in response to ribosome collisions (ribosome stalling).

It localises to the cytoplasm. In terms of biological role, component of the large ribosomal subunit. The ribosome is a large ribonucleoprotein complex responsible for the synthesis of proteins in the cell. Binds directly to 26S ribosomal RNA. This Mus musculus (Mouse) protein is Large ribosomal subunit protein uL11 (Rpl12).